Reading from the N-terminus, the 157-residue chain is Arginine repressor (157 aa).

Belongs to the ArgR family.

Its subcellular location is the cytoplasm. It participates in amino-acid biosynthesis; L-arginine biosynthesis [regulation]. Functionally, regulates arginine biosynthesis genes. This is Arginine repressor from Deinococcus deserti (strain DSM 17065 / CIP 109153 / LMG 22923 / VCD115).